The chain runs to 435 residues: GTPase Der (435 aa).

2 EngA-type G domains span residues 2–167 (ATVV…RESG) and 178–351 (PKIA…ESYC). Residues 8–15 (GRANVGKS), 55–59 (DTCGV), 118–121 (NKSE), 184–191 (GKPNVGKS), 231–235 (DTAGM), and 297–300 (NKFD) contribute to the GTP site. One can recognise a KH-like domain in the interval 352 to 435 (RKVPQQLLSK…PLVIEFKSRR (84 aa)).

This sequence belongs to the TRAFAC class TrmE-Era-EngA-EngB-Septin-like GTPase superfamily. EngA (Der) GTPase family. As to quaternary structure, associates with the 50S ribosomal subunit.

Functionally, GTPase that plays an essential role in the late steps of ribosome biogenesis. The chain is GTPase Der from Pseudothermotoga lettingae (strain ATCC BAA-301 / DSM 14385 / NBRC 107922 / TMO) (Thermotoga lettingae).